The primary structure comprises 158 residues: ATP synthase subunit delta (158 aa).

Belongs to the ATPase delta chain family. In terms of assembly, F-type ATPases have 2 components, F(1) - the catalytic core - and F(0) - the membrane proton channel. F(1) has five subunits: alpha(3), beta(3), gamma(1), delta(1), epsilon(1). F(0) has three main subunits: a(1), b(2) and c(10-14). The alpha and beta chains form an alternating ring which encloses part of the gamma chain. F(1) is attached to F(0) by a central stalk formed by the gamma and epsilon chains, while a peripheral stalk is formed by the delta and b chains.

It localises to the cell membrane. In terms of biological role, f(1)F(0) ATP synthase produces ATP from ADP in the presence of a proton or sodium gradient. F-type ATPases consist of two structural domains, F(1) containing the extramembraneous catalytic core and F(0) containing the membrane proton channel, linked together by a central stalk and a peripheral stalk. During catalysis, ATP synthesis in the catalytic domain of F(1) is coupled via a rotary mechanism of the central stalk subunits to proton translocation. This protein is part of the stalk that links CF(0) to CF(1). It either transmits conformational changes from CF(0) to CF(1) or is implicated in proton conduction. In Roseiflexus castenholzii (strain DSM 13941 / HLO8), this protein is ATP synthase subunit delta.